The chain runs to 204 residues: Large ribosomal subunit protein eL15 (204 aa).

The protein belongs to the eukaryotic ribosomal protein eL15 family.

In Tetrahymena thermophila (strain SB210), this protein is Large ribosomal subunit protein eL15 (RPL15).